A 212-amino-acid polypeptide reads, in one-letter code: 2,3-bisphosphoglycerate-dependent phosphoglycerate mutase (212 aa).

Substrate-binding positions include 9-16, 22-23, arginine 61, 88-91, lysine 99, 115-116, and 159-160; these read RHGQSEWN, TG, ERDY, RR, and GN. The active-site Tele-phosphohistidine intermediate is histidine 10. The active-site Proton donor/acceptor is glutamate 88.

The protein belongs to the phosphoglycerate mutase family. BPG-dependent PGAM subfamily. In terms of assembly, homodimer.

The enzyme catalyses (2R)-2-phosphoglycerate = (2R)-3-phosphoglycerate. The protein operates within carbohydrate degradation; glycolysis; pyruvate from D-glyceraldehyde 3-phosphate: step 3/5. Its function is as follows. Catalyzes the interconversion of 2-phosphoglycerate and 3-phosphoglycerate. The polypeptide is 2,3-bisphosphoglycerate-dependent phosphoglycerate mutase (Methylorubrum extorquens (strain CM4 / NCIMB 13688) (Methylobacterium extorquens)).